The sequence spans 431 residues: Glutamate-1-semialdehyde 2,1-aminomutase (431 aa).

Lysine 269 carries the N6-(pyridoxal phosphate)lysine modification.

Belongs to the class-III pyridoxal-phosphate-dependent aminotransferase family. HemL subfamily. Homodimer. Requires pyridoxal 5'-phosphate as cofactor.

The protein localises to the cytoplasm. It carries out the reaction (S)-4-amino-5-oxopentanoate = 5-aminolevulinate. It functions in the pathway porphyrin-containing compound metabolism; protoporphyrin-IX biosynthesis; 5-aminolevulinate from L-glutamyl-tRNA(Glu): step 2/2. The protein operates within porphyrin-containing compound metabolism; chlorophyll biosynthesis. The sequence is that of Glutamate-1-semialdehyde 2,1-aminomutase from Pelodictyon phaeoclathratiforme (strain DSM 5477 / BU-1).